Reading from the N-terminus, the 127-residue chain is Holo-[acyl-carrier-protein] synthase (127 aa).

Mg(2+) is bound by residues Asp7 and Glu56.

It belongs to the P-Pant transferase superfamily. AcpS family. Mg(2+) is required as a cofactor.

The protein localises to the cytoplasm. It carries out the reaction apo-[ACP] + CoA = holo-[ACP] + adenosine 3',5'-bisphosphate + H(+). In terms of biological role, transfers the 4'-phosphopantetheine moiety from coenzyme A to a Ser of acyl-carrier-protein. In Leptospira biflexa serovar Patoc (strain Patoc 1 / Ames), this protein is Holo-[acyl-carrier-protein] synthase.